Consider the following 527-residue polypeptide: Probable pectinesterase/pectinesterase inhibitor 32 (527 aa).

The signal sequence occupies residues 1-24; sequence MAKFRQMGSSIFFLFLIIISLCSA. Residues 25 to 165 form a pectinesterase inhibitor 32 region; sequence HKEAFSSTDL…GTTVRNLLTM (141 aa). Residues N110, N209, N224, and N280 are each glycosylated (N-linked (GlcNAc...) asparagine). Positions 214–511 are pectinesterase 32; that stretch reads DAVVAADGTG…FTVSQLIQGN (298 aa). Residues T289 and Q319 each contribute to the substrate site. Residue D342 is the Proton donor; for pectinesterase activity of the active site. Cysteines 356 and 376 form a disulfide. Catalysis depends on D363, which acts as the Nucleophile; for pectinesterase activity. The N-linked (GlcNAc...) asparagine glycan is linked to N423. Substrate contacts are provided by R431 and W433. N-linked (GlcNAc...) asparagine glycans are attached at residues N494 and N501.

This sequence in the N-terminal section; belongs to the PMEI family. In the C-terminal section; belongs to the pectinesterase family. In terms of tissue distribution, expressed in siliques.

Its subcellular location is the secreted. The protein resides in the cell wall. It catalyses the reaction [(1-&gt;4)-alpha-D-galacturonosyl methyl ester](n) + n H2O = [(1-&gt;4)-alpha-D-galacturonosyl](n) + n methanol + n H(+). It functions in the pathway glycan metabolism; pectin degradation; 2-dehydro-3-deoxy-D-gluconate from pectin: step 1/5. Acts in the modification of cell walls via demethylesterification of cell wall pectin. The chain is Probable pectinesterase/pectinesterase inhibitor 32 (PME32) from Arabidopsis thaliana (Mouse-ear cress).